A 468-amino-acid polypeptide reads, in one-letter code: uncharacterized protein (468 aa).

Coiled coils occupy residues 10–94 (NEAL…VKEL) and 147–279 (FVEL…EASI). The disordered stretch occupies residues 324–369 (TPRTVDPIPEGTIIKKESSDDAMFSGLKKSKPKKSNKSNNNQADSD). Position 342 is a phosphoserine (serine 342). Positions 399-445 (VEQLKSRIAHFKEQQDSVTKQRIEKAKQEIEKLEAKYNSKEEKTLTE) form a coiled coil.

It is found in the cytoplasm. This is an uncharacterized protein from Schizosaccharomyces pombe (strain 972 / ATCC 24843) (Fission yeast).